A 34-amino-acid chain; its full sequence is Photosystem II reaction center protein Psb30 (34 aa).

The chain crosses the membrane as a helical span at residues 6-26; sequence VIGQLVSTGLIGLLGPAVIIL.

This sequence belongs to the Psb30/Ycf12 family. PSII is composed of 1 copy each of membrane proteins PsbA, PsbB, PsbC, PsbD, PsbE, PsbF, PsbH, PsbI, PsbJ, PsbK, PsbL, PsbM, PsbT, PsbX, PsbY, PsbZ, Psb30/Ycf12, peripheral proteins of the oxygen-evolving complex and a large number of cofactors. It forms dimeric complexes.

Its subcellular location is the plastid. The protein localises to the chloroplast thylakoid membrane. A core subunit of photosystem II (PSII), probably helps stabilize the reaction center. This is Photosystem II reaction center protein Psb30 from Skeletonema costatum (Marine centric diatom).